Consider the following 415-residue polypeptide: MSLEAEVPELGQDDSQRELTIKEEYQLWRKNCRYMYEFVSETALTWPSLTIQWLPENKTNEAEGLIDAKLLLGTHTSGEDTNYLKLASTQIPLSNSSNTEEKSNKKVTSRIKITKKFENNFEINRARYMPQDPSIVSTINGAGEIDLYNLGGDQKTAIAHFTPHEDNGYGLSWSPHKKGYLLTASDDKTVVLTDTSRLDATDLSQVCKFTTHKDIVNDAKWHQFDESLFGSVSDDKYFYLFDIRTPGEPVSKFYHPESEGINSLSFSPFSQYLVATGNANSNISLLDTRKLSTKSAVSDGLLHTMMGHSDSITSLEFSPHKDGMLASGSQDRRLILWDLFKVGEEQAQEDAEDGCPELFMMHAGHTGAVTDLSWCPYKDWTIGSVADDNIVHLWEIGKTLLNAEKGIELKDTDLE.

WD repeat units lie at residues 118 to 158 (ENNF…KTAI), 163 to 203 (PHED…ATDL), 211 to 251 (THKD…EPVS), 256 to 296 (PESE…TKSA), and 307 to 347 (GHSD…EEQA). The interaction with the histone H4 N-terminus stretch occupies residues 349 to 353 (EDAED). A WD 6 repeat occupies 364–404 (GHTGAVTDLSWCPYKDWTIGSVADDNIVHLWEIGKTLLNAE).

This sequence belongs to the WD repeat RBAP46/RBAP48/MSI1 family. As to quaternary structure, component of the HAT-B complex composed of at least HAT1 and HAT2. The HAT-B complex binds to histone H4 tail.

The protein localises to the cytoplasm. Its subcellular location is the nucleus. Its function is as follows. Regulatory subunit of the histone acetylase B (HAT-B) complex. The complex acetylates 'Lys-12' of histone H4 which is required for telomeric silencing. This Debaryomyces hansenii (strain ATCC 36239 / CBS 767 / BCRC 21394 / JCM 1990 / NBRC 0083 / IGC 2968) (Yeast) protein is Histone acetyltransferase type B subunit 2 (HAT2).